The following is a 161-amino-acid chain: SsrA-binding protein (161 aa).

The protein belongs to the SmpB family.

The protein resides in the cytoplasm. Required for rescue of stalled ribosomes mediated by trans-translation. Binds to transfer-messenger RNA (tmRNA), required for stable association of tmRNA with ribosomes. tmRNA and SmpB together mimic tRNA shape, replacing the anticodon stem-loop with SmpB. tmRNA is encoded by the ssrA gene; the 2 termini fold to resemble tRNA(Ala) and it encodes a 'tag peptide', a short internal open reading frame. During trans-translation Ala-aminoacylated tmRNA acts like a tRNA, entering the A-site of stalled ribosomes, displacing the stalled mRNA. The ribosome then switches to translate the ORF on the tmRNA; the nascent peptide is terminated with the 'tag peptide' encoded by the tmRNA and targeted for degradation. The ribosome is freed to recommence translation, which seems to be the essential function of trans-translation. This chain is SsrA-binding protein, found in Vibrio vulnificus (strain YJ016).